A 181-amino-acid chain; its full sequence is Adenine phosphoribosyltransferase (181 aa).

Belongs to the purine/pyrimidine phosphoribosyltransferase family. As to quaternary structure, homodimer.

The protein resides in the cytoplasm. It carries out the reaction AMP + diphosphate = 5-phospho-alpha-D-ribose 1-diphosphate + adenine. Its pathway is purine metabolism; AMP biosynthesis via salvage pathway; AMP from adenine: step 1/1. In terms of biological role, catalyzes a salvage reaction resulting in the formation of AMP, that is energically less costly than de novo synthesis. This chain is Adenine phosphoribosyltransferase, found in Colwellia psychrerythraea (strain 34H / ATCC BAA-681) (Vibrio psychroerythus).